A 630-amino-acid chain; its full sequence is Pro-interleukin-16 (630 aa).

2 disordered regions span residues 30–268 (ENPG…FPLT) and 316–343 (PKEG…ASDT). Low complexity predominate over residues 129-143 (IRASSSSSIKQRISS). Ser220 carries the phosphoserine modification. Residues 321-343 (SPTSSSNEDSAANGSAETSASDT) show a composition bias toward polar residues. The interval 404–500 (KQLDSIHVTI…IVTRKLTAES (97 aa)) is interaction with PPP1R12A, PPP1R12B and PPP1R12C. 2 consecutive PDZ domains span residues 410–495 (HVTI…VTRK) and 532–617 (TVTL…IRRK).

Homotetramer. Pro-interleukin-16 interacts (via PDZ 2 domain) with PPP1R12A, PPP1R12B and PPP1R12C. Pro-interleukin-16 interacts with GRIN2A. Pro-interleukin-16 interacts with GABPB1. Pro-interleukin-16 interacts (via PDZ 3 domain) with HDAC3.

It is found in the secreted. Its subcellular location is the cytoplasm. It localises to the nucleus. Interleukin-16 stimulates a migratory response in CD4+ lymphocytes, monocytes, and eosinophils. Primes CD4+ T-cells for IL-2 and IL-15 responsiveness. Also induces T-lymphocyte expression of interleukin 2 receptor. Ligand for CD4. Its function is as follows. Pro-interleukin-16 is involved in cell cycle progression in T-cells. Appears to be involved in transcriptional regulation of SKP2 and is probably part of a transcriptional repression complex on the core promoter of the SKP2 gene. May act as a scaffold for GABPB1 (the DNA-binding subunit the GABP transcription factor complex) and HDAC3 thus maintaining transcriptional repression and blocking cell cycle progression in resting T-cells. The sequence is that of Pro-interleukin-16 (IL16) from Macaca fascicularis (Crab-eating macaque).